Consider the following 282-residue polypeptide: Shikimate dehydrogenase (NADP(+)) (282 aa).

Residues 19–21 (TQS) and Thr66 contribute to the shikimate site. The active-site Proton acceptor is the Lys70. Asn91 and Asp107 together coordinate shikimate. NADP(+) contacts are provided by residues 132–136 (GAGGA), 155–160 (NRTITR), Ile224, and Gly246.

Belongs to the shikimate dehydrogenase family. In terms of assembly, homodimer.

It carries out the reaction shikimate + NADP(+) = 3-dehydroshikimate + NADPH + H(+). It functions in the pathway metabolic intermediate biosynthesis; chorismate biosynthesis; chorismate from D-erythrose 4-phosphate and phosphoenolpyruvate: step 4/7. Its function is as follows. Involved in the biosynthesis of the chorismate, which leads to the biosynthesis of aromatic amino acids. Catalyzes the reversible NADPH linked reduction of 3-dehydroshikimate (DHSA) to yield shikimate (SA). The chain is Shikimate dehydrogenase (NADP(+)) from Buchnera aphidicola subsp. Baizongia pistaciae (strain Bp).